Reading from the N-terminus, the 284-residue chain is 3-methyl-2-oxobutanoate hydroxymethyltransferase 2 (284 aa).

Mg(2+) contacts are provided by Asp-49 and Asp-88. 3-methyl-2-oxobutanoate-binding positions include 49-50 (DS), Asp-88, and Lys-118. Mg(2+) is bound at residue Glu-120. The active-site Proton acceptor is the Glu-187.

The protein belongs to the PanB family. Homodecamer; pentamer of dimers. Mg(2+) serves as cofactor.

The protein resides in the cytoplasm. The catalysed reaction is 3-methyl-2-oxobutanoate + (6R)-5,10-methylene-5,6,7,8-tetrahydrofolate + H2O = 2-dehydropantoate + (6S)-5,6,7,8-tetrahydrofolate. It participates in cofactor biosynthesis; (R)-pantothenate biosynthesis; (R)-pantoate from 3-methyl-2-oxobutanoate: step 1/2. In terms of biological role, catalyzes the reversible reaction in which hydroxymethyl group from 5,10-methylenetetrahydrofolate is transferred onto alpha-ketoisovalerate to form ketopantoate. In Burkholderia ambifaria (strain ATCC BAA-244 / DSM 16087 / CCUG 44356 / LMG 19182 / AMMD) (Burkholderia cepacia (strain AMMD)), this protein is 3-methyl-2-oxobutanoate hydroxymethyltransferase 2.